Reading from the N-terminus, the 168-residue chain is DAZ-associated protein 2 (168 aa).

A compositionally biased stretch (low complexity) spans 1–13 (MNSKGQYPTQPTY). Positions 1-25 (MNSKGQYPTQPTYPVQPPGNPVYPQ) are disordered. The PPAY motif lies at 39-42 (PPAY). At Ser-77 the chain carries Phosphoserine.

In terms of assembly, interacts with SOX6. Interacts with DAZ1 and DAZL. Interacts with IL17RB. May interact with FAM168B. Interacts with INCA1. Interacts with EIF4G1 and EIF4G2. Interacts (via PPAY motif) with NEDD4 (via WW domains). Interacts with transcription factor TCF4; the interaction results in localization of DAZAP2 to the nucleus. Interacts with transcription factors TCF7 and TCF7L1. Interacts with transcription factor LEF1. Interacts with serine/threonine-protein kinase HIPK2; the interaction results in phosphorylation of DAZAP2 which causes localization of DAZAP2 to the nucleus, reduces interaction of DAZAP2 with HIPK2 and prevents DAZAP2-dependent degradation of HIPK2. Interacts with ubiquitin ligase SIAH1; the interaction is decreased following phosphorylation of DAZAP2 by HIPK2. Interacts with TP53; the interaction is triggered by DNA damage. In terms of processing, ubiquitinated by SMURF2, leading to proteasomal degradation. Ubiquitinated by NEDD4, leading to proteasomal degradation. Following DNA damage, phosphorylated by HIPK2 which promotes DAZAP2 localization to the nucleus, reduces interaction of DAZAP2 with HIPK2 and SIAH1, and prevents DAZAP2-dependent ubiquitination of HIPK2 by E3 ubiquitin-protein ligase SIAH1 and subsequent HIPK2 proteasomal degradation.

The protein localises to the cytoplasm. It localises to the nucleus. It is found in the nucleus speckle. The protein resides in the nuclear body. Its subcellular location is the stress granule. In unstressed cells, promotes SIAH1-mediated polyubiquitination and degradation of the serine/threonine-protein kinase HIPK2, probably by acting as a loading factor that potentiates complex formation between HIPK2 and ubiquitin ligase SIAH1. In response to DNA damage, localizes to the nucleus following phosphorylation by HIPK2 and modulates the expression of a subset of TP53/p53 target genes by binding to TP53 at target gene promoters. This limits the expression of a number of cell death-mediating TP53 target genes, reducing DNA damage-induced cell death. Enhances the binding of transcription factor TCF7L2/TCF4, a Wnt signaling pathway effector, to the promoters of target genes. Plays a role in stress granule formation. The polypeptide is DAZ-associated protein 2 (Macaca fascicularis (Crab-eating macaque)).